A 251-amino-acid chain; its full sequence is NADH-quinone oxidoreductase subunit C (251 aa).

Residues 1 to 34 form a disordered region; that stretch reads MSDANNTAGDANEVNPEKDLSAENLPGQRGQGGE.

Belongs to the complex I 30 kDa subunit family. As to quaternary structure, NDH-1 is composed of 14 different subunits. Subunits NuoB, C, D, E, F, and G constitute the peripheral sector of the complex.

It localises to the cell membrane. It carries out the reaction a quinone + NADH + 5 H(+)(in) = a quinol + NAD(+) + 4 H(+)(out). Its function is as follows. NDH-1 shuttles electrons from NADH, via FMN and iron-sulfur (Fe-S) centers, to quinones in the respiratory chain. The immediate electron acceptor for the enzyme in this species is believed to be a menaquinone. Couples the redox reaction to proton translocation (for every two electrons transferred, four hydrogen ions are translocated across the cytoplasmic membrane), and thus conserves the redox energy in a proton gradient. This is NADH-quinone oxidoreductase subunit C from Streptomyces coelicolor (strain ATCC BAA-471 / A3(2) / M145).